We begin with the raw amino-acid sequence, 334 residues long: MLRLHWLALLVLLLPMAAAQLRPEPELDAQWDLWKRTIQKAVQRQGGRNVPEVDLGEEPEVHRCPQRGARLGKHSFQLAMNYLGDMTSEEVVRTMTGLRVPRSRPRPNGTLYVPDWSSRAPAAVDWRRKGYVTPVKDQGQCGSCWAFSSVGALEGQLKRRTGKLLSLSPQNLVYCVSNNNGCGGGYMTNAFEYVRLNRGIDSEDAYPYIGQDESCMYSPTGKAAKCRGYREIPEDNEKALKRAVARIGPVSVGIDASLPSFQFYSRGVYYDTGCNPENINHAVLAVGYGAQKGTKHWIIKNSWGTEWGNKGYVLLARNMKQTCGIANLASFPKM.

Positions 1-19 are cleaved as a signal peptide; it reads MLRLHWLALLVLLLPMAAA. The propeptide at 20–119 is activation peptide; sequence QLRPEPELDA…TLYVPDWSSR (100 aa). N-linked (GlcNAc...) asparagine glycosylation occurs at asparagine 108. 3 disulfides stabilise this stretch: cysteine 141–cysteine 182, cysteine 175–cysteine 215, and cysteine 274–cysteine 323. Cysteine 144 is an active-site residue. Residues histidine 281 and asparagine 301 contribute to the active site.

The protein belongs to the peptidase C1 family.

The catalysed reaction is Broad proteolytic activity. With small-molecule substrates and inhibitors, the major determinant of specificity is P2, which is preferably Leu, Met &gt; Phe, and not Arg.. In terms of biological role, closely involved in osteoclastic bone resorption and may participate partially in the disorder of bone remodeling. Displays potent endoprotease activity against fibrinogen at acid pH. May play an important role in extracellular matrix degradation. This chain is Cathepsin K (CTSK), found in Gallus gallus (Chicken).